We begin with the raw amino-acid sequence, 121 residues long: Colipase-like protein 1 (121 aa).

An N-terminal signal peptide occupies residues 1 to 23 (MMLPQWLLLLFLLFFFLFLLTRG). 5 cysteine pairs are disulfide-bonded: Cys39/Cys50, Cys45/Cys61, Cys49/Cys83, Cys71/Cys91, and Cys85/Cys107.

This sequence belongs to the colipase family. Exclusively expressed in epididymis, in the corpus region.

The protein resides in the secreted. The polypeptide is Colipase-like protein 1 (CLPSL1) (Homo sapiens (Human)).